The primary structure comprises 791 residues: MGTVGKKKDRPTHGCSTIPKLALELKQIIHSTTHPKVPPVTPLRVMMPLGKLSKGASLDDLIQMCIQAFDLDGNMGQNSELLQIMLTMHGFLLPSTELLMKLRTLYQDALQNRSFSFCLRICYFIRYWVTELWVMFKMDAKLTQAMEEFQELVRSKGEELHWRLIDTAQINSRDWSRKLTQRIKPNCSKKRKVSLLFDHLEPQELAEHLTYLEFKAFRRISFSDYQNYIVSGCVKENPTMERSIALCNGISQWVQFMVLSRPTPQLRAEVLTKFIHVAQKLHQLQNFNTLMAVIGGLCHSSISRLKDTSAHVSHDVNKVLNEMTELLSSCRNYDNYRRVYNECTNFKIPILGVHLKDLIALHEAMPDFLEDSKINVPKLHSLYNHINELIQLQNIAPPLEANMDLVHLLTLSLDLYYTEDEMYELSYAREPRNHRAPPVTPSKPPVVADWASGVSPKPDPKTISKHVQRMVDSVFKNYDLDQDGYISQEEFEKIAASFPFSFCVMDKDREGLISRQEITAYFMRASSICSKLGLGFLHNFQETTYLRPTFCDNCAGFLWGVIKQGYRCKDCGMNCHKQCKELVVFECKKRSKLSVGENSSMFDSGQLEVIPAGGKGQTNDCLGAEEGPYSYPNGDGDIHTEVSKDRTIMLMGSSAQKISVRLQPAVKHRATQTENEPQSLCLQVPSPQRSRTPGLTSHLPISPMPSPCPSPVPTRKKAYAKWENKDSIRKARAELRGGKAGIQELEKEKALLKEENTTLKIQLKDAQRRVETLRAELRKYVLDSDVHQTGS.

The 124-residue stretch at 49-172 (LGKLSKGASL…RLIDTAQINS (124 aa)) folds into the N-terminal Ras-GEF domain. Residues 53-106 (SKGASLDDLIQMCIQAFDLDGNMGQNSELLQIMLTMHGFLLPSTELLMKLRTLY) are ras exchanger motif region; required for transforming activity. The Ras-GEF domain occupies 201-432 (EPQELAEHLT…YELSYAREPR (232 aa)). EF-hand domains follow at residues 466 to 501 (HVQR…FPFS) and 502 to 528 (FCVM…ASSI). Residues Asp-479, Asp-481, Asp-483, Tyr-485, Glu-490, Asp-506, Asp-508, Glu-510, and Glu-517 each contribute to the Ca(2+) site. The Phorbol-ester/DAG-type zinc finger occupies 537–587 (LHNFQETTYLRPTFCDNCAGFLWGVIKQGYRCKDCGMNCHKQCKELVVFEC). Residues 683 to 695 (QVPSPQRSRTPGL) are compositionally biased toward polar residues. A disordered region spans residues 683–715 (QVPSPQRSRTPGLTSHLPISPMPSPCPSPVPTR). Pro residues predominate over residues 702–712 (SPMPSPCPSPV). A coiled-coil region spans residues 728-785 (IRKARAELRGGKAGIQELEKEKALLKEENTTLKIQLKDAQRRVETLRAELRKYVLDSD).

Belongs to the RASGRP family.

It localises to the cytoplasm. The protein resides in the cytosol. It is found in the cell membrane. The protein localises to the golgi apparatus membrane. Its subcellular location is the endoplasmic reticulum membrane. Regulated by F-actin polymerization and probably by calcium. Functions as a diacylglycerol (DAG)-regulated nucleotide exchange factor specifically activating Ras through the exchange of bound GDP for GTP. This chain is RAS guanyl-releasing protein 1 (rasgrp1), found in Xenopus tropicalis (Western clawed frog).